A 256-amino-acid polypeptide reads, in one-letter code: Tetraspanin-32 (256 aa).

Transmembrane regions (helical) follow at residues 15–35 (LITN…VVVI), 61–81 (AFYV…LSTI), 90–110 (LMAA…QVAF), and 203–223 (CTSL…WFAI).

It belongs to the tetraspanin (TM4SF) family. Expressed exclusively in hematopoietic tissues. Expression detected in spleen, thymus, bone marrow and peripheral blood leukocytes but not in heart, brain, lung, liver, kidney or testis.

Its subcellular location is the membrane. This chain is Tetraspanin-32 (Tspan32), found in Mus musculus (Mouse).